Consider the following 745-residue polypeptide: Multiple C2 domain and transmembrane region protein 13 (745 aa).

The interval 1–30 (MAANKDEFSVKQISPKLGGERGARNPYGPT) is disordered. 3 consecutive C2 domains span residues 21 to 139 (RGAR…PQRY), 171 to 293 (DASE…SAPA), and 326 to 453 (AEES…ACSY). Residues D56, D61, D106, and N110 each coordinate Ca(2+). A run of 2 helical transmembrane segments spans residues 568–588 (SLIV…LVGL) and 688–708 (FYCW…PMWL).

Belongs to the MCTP family. It depends on Ca(2+) as a cofactor. In terms of tissue distribution, expressed in incipient leaf primordia.

The protein resides in the cell membrane. The protein localises to the cytoplasm. Its function is as follows. May function as a signaling molecule by regulating the trafficking of other regulators. The polypeptide is Multiple C2 domain and transmembrane region protein 13 (Arabidopsis thaliana (Mouse-ear cress)).